The sequence spans 549 residues: Copalyl diphosphate synthase (549 aa).

A DXDDTA motif motif is present at residues 321-326 (DADDTA). The short motif at 451-457 (QRDDGSW) is the QXXDGSW motif element.

Belongs to the terpene synthase family. Requires Mg(2+) as cofactor.

The enzyme catalyses (2E,6E,10E)-geranylgeranyl diphosphate = (+)-copalyl diphosphate. Involved in the biosynthesis of the labdane-type bicyclic diterpene labda-8(17),12(E),14-triene. Catalyzes the conversion of geranylgeranyl diphosphate (GGDP) into (+)-copalyl diphosphate. The sequence is that of Copalyl diphosphate synthase from Streptomyces anulatus (Streptomyces chrysomallus).